Reading from the N-terminus, the 346-residue chain is Calcium uniporter protein, mitochondrial (346 aa).

The Mitochondrial matrix segment spans residues methionine 1–alanine 195. The disordered stretch occupies residues glutamate 55 to valine 120. Basic and acidic residues-rich tracts occupy residues methionine 76–threonine 91 and arginine 109–phenylalanine 119. Residues glutamine 196 to leucine 216 traverse the membrane as a helical segment. Residues threonine 217–valine 226 lie on the Mitochondrial intermembrane side of the membrane. The Selectivity filter signature appears at tryptophan 224–tyrosine 232. Residues methionine 227–tryptophan 248 traverse the membrane as a helical segment. Residue glutamate 228 coordinates Ca(2+). The Mitochondrial matrix portion of the chain corresponds to histidine 249–aspartate 346. The disordered stretch occupies residues tryptophan 306–aspartate 346. Residues aspartate 315–asparagine 328 show a composition bias toward basic and acidic residues.

Belongs to the MCU (TC 1.A.77) family. In terms of assembly, homotetramer, assembles in a dimer or dimers configuration with two interfaces.

The protein resides in the mitochondrion inner membrane. The enzyme catalyses Ca(2+)(in) = Ca(2+)(out). Its function is as follows. Highly selective calcium channel localized to the inner mitochondrial membrane, which mediates calcium uptake into the mitochondrial matrix. Mitochondrial calcium homeostasis plays key roles in cellular physiology and regulates ATP production, cytoplasmic calcium signals and activation of cell death pathways. Sufficient to operate as a pore-forming channel without the need of calcium-sensor or auxiliary subunit. This chain is Calcium uniporter protein, mitochondrial, found in Cyphellophora europaea (strain CBS 101466) (Phialophora europaea).